The chain runs to 1258 residues: Plasma membrane calcium-transporting ATPase 3 (1258 aa).

Residues 1–19 are compositionally biased toward polar residues; the sequence is MGDMANSSIEFHPKPQQQR. The interval 1–22 is disordered; it reads MGDMANSSIEFHPKPQQQREVP. Over 1-97 the chain is Cytoplasmic; that stretch reads MGDMANSSIE…NFIPPKQPKT (97 aa). Phosphoserine is present on Ser-8. Residues 98-118 form a helical membrane-spanning segment; it reads FLQLVWEALQDVTLIILEVAA. Residues 119-155 lie on the Extracellular side of the membrane; the sequence is IVSLGLSFYAPPGEESEACGNVSGGAEDEGEAEAGWI. Residues 156 to 176 form a helical membrane-spanning segment; sequence EGAAILLSVICVVLVTAFNDW. At 177–364 the chain is on the cytoplasmic side; sequence SKEKQFRGLQ…KEKSVLQGKL (188 aa). Disordered stretches follow at residues 298–328 and 335–354; these read EEEK…GAVA and KSAE…NVPK. 2 stretches are compositionally biased toward basic and acidic residues: residues 299 to 308 and 342 to 354; these read EEKKDKKGKQ and MEER…NVPK. The helical transmembrane segment at 365-384 threads the bilayer; the sequence is TKLAVQIGKAGLVMSAITVI. At 385–417 the chain is on the extracellular side; it reads ILVLYFVIETFVVDGRVWLAECTPVYVQYFVKF. A helical membrane pass occupies residues 418-435; the sequence is FIIGVTVLVVAVPEGLPL. Topologically, residues 436–849 are cytoplasmic; the sequence is AVTISLAYSV…MWGRNVYDSI (414 aa). The active-site 4-aspartylphosphate intermediate is the Asp-473. 2 residues coordinate Mg(2+): Asp-794 and Asp-798. A helical membrane pass occupies residues 850 to 869; that stretch reads SKFLQFQLTVNVVAVIVAFT. Topologically, residues 870-879 are extracellular; the sequence is GACITQDSPL. The helical transmembrane segment at 880 to 900 threads the bilayer; the sequence is KAVQMLWVNLIMDTFASLALA. At 901 to 920 the chain is on the cytoplasmic side; it reads TEPPTESLLLRKPYGRDKPL. A helical membrane pass occupies residues 921 to 943; the sequence is ISRTMMKNILGHAVYQLTIIFTL. At 944-961 the chain is on the extracellular side; it reads LFVGELFFDIDSGRNAPL. Residues 962-983 traverse the membrane as a helical segment; that stretch reads HSPPSEHYTIIFNTFVMMQLFN. Topologically, residues 984–1002 are cytoplasmic; the sequence is EINARKIHGERNVFDGIFS. The chain crosses the membrane as a helical span at residues 1003-1024; that stretch reads NPIFCTIVLGTFGIQIVIVQFG. At 1025–1034 the chain is on the extracellular side; sequence GKPFSCSPLS. The chain crosses the membrane as a helical span at residues 1035–1056; sequence TEQWLWCLFVGVGELVWGQVIA. The Cytoplasmic portion of the chain corresponds to 1057–1258; sequence TIPTSQLKCL…SPLHSMETSL (202 aa). Thr-1079 bears the Phosphothreonine mark. The segment at 1097–1114 is calmodulin-binding subdomain A; it reads LRRGQILWFRGLNRIQTQ. Position 1113 is a phosphothreonine; by PKC (Thr-1113). Positions 1115 to 1124 are calmodulin-binding subdomain B; sequence MEVVSTFKRS. The residue at position 1126 (Ser-1126) is a Phosphoserine. The disordered stretch occupies residues 1204-1258; sequence ENEERLRAPPPPPPNQNNNAIDSGIYLTTHATKSATSSAFSSRPGSPLHSMETSL. A compositionally biased stretch (low complexity) spans 1231-1245; sequence TTHATKSATSSAFSS.

This sequence belongs to the cation transport ATPase (P-type) (TC 3.A.3) family. Type IIB subfamily. In terms of assembly, interacts with PDZD11. Interacts (via N-terminus) with YWHAE. Expressed predominantly in brain and skeletal muscle. Expressed in the molecular layer of the cerebellar cortex, in particular in granule cells (at protein level). Expressed in aldosterone producing glomerulosa cells of adrenal glands (at protein level). Detected at low levels in various tissues including testis, stomach, small intestine, and large intestine. In terms of tissue distribution, most abundant form in brain and most other tissues. As to expression, most abundant form in skeletal muscle and is also found in brain and at low levels in testis and kidney.

It localises to the cell membrane. Its subcellular location is the presynaptic cell membrane. The enzyme catalyses Ca(2+)(in) + ATP + H2O = Ca(2+)(out) + ADP + phosphate + H(+). Functionally, ATP-driven Ca(2+) ion pump involved in the maintenance of basal intracellular Ca(2+) levels at the presynaptic terminals. Uses ATP as an energy source to transport cytosolic Ca(2+) ions across the plasma membrane to the extracellular compartment. May counter-transport protons, but the mechanism and the stoichiometry of this Ca(2+)/H(+) exchange remains to be established. The protein is Plasma membrane calcium-transporting ATPase 3 (Atp2b3) of Rattus norvegicus (Rat).